Consider the following 156-residue polypeptide: Small ribosomal subunit protein uS7 (156 aa).

This sequence belongs to the universal ribosomal protein uS7 family. As to quaternary structure, part of the 30S ribosomal subunit. Contacts proteins S9 and S11.

Functionally, one of the primary rRNA binding proteins, it binds directly to 16S rRNA where it nucleates assembly of the head domain of the 30S subunit. Is located at the subunit interface close to the decoding center, probably blocks exit of the E-site tRNA. The protein is Small ribosomal subunit protein uS7 of Afipia carboxidovorans (strain ATCC 49405 / DSM 1227 / KCTC 32145 / OM5) (Oligotropha carboxidovorans).